Here is an 881-residue protein sequence, read N- to C-terminus: Alanine--tRNA ligase (881 aa).

Zn(2+) contacts are provided by His564, His568, Cys666, and His670.

It belongs to the class-II aminoacyl-tRNA synthetase family. The cofactor is Zn(2+).

The protein resides in the cytoplasm. It catalyses the reaction tRNA(Ala) + L-alanine + ATP = L-alanyl-tRNA(Ala) + AMP + diphosphate. Catalyzes the attachment of alanine to tRNA(Ala) in a two-step reaction: alanine is first activated by ATP to form Ala-AMP and then transferred to the acceptor end of tRNA(Ala). Also edits incorrectly charged Ser-tRNA(Ala) and Gly-tRNA(Ala) via its editing domain. This chain is Alanine--tRNA ligase, found in Caldicellulosiruptor saccharolyticus (strain ATCC 43494 / DSM 8903 / Tp8T 6331).